Consider the following 438-residue polypeptide: SPbeta prophage-derived uncharacterized protein YopA (438 aa).

A helical membrane pass occupies residues 391–411 (LHVLYLGVWYLELLTLGILGY).

Its subcellular location is the cell membrane. This Bacillus subtilis (strain 168) protein is SPbeta prophage-derived uncharacterized protein YopA (yopA).